The primary structure comprises 206 residues: Imidazoleglycerol-phosphate dehydratase (206 aa).

Belongs to the imidazoleglycerol-phosphate dehydratase family.

The protein resides in the cytoplasm. The catalysed reaction is D-erythro-1-(imidazol-4-yl)glycerol 3-phosphate = 3-(imidazol-4-yl)-2-oxopropyl phosphate + H2O. The protein operates within amino-acid biosynthesis; L-histidine biosynthesis; L-histidine from 5-phospho-alpha-D-ribose 1-diphosphate: step 6/9. The protein is Imidazoleglycerol-phosphate dehydratase of Synechococcus sp. (strain JA-3-3Ab) (Cyanobacteria bacterium Yellowstone A-Prime).